Consider the following 105-residue polypeptide: Thioredoxin (105 aa).

The Thioredoxin domain occupies 1–105 (MFELDKDTFE…NVEAMVKKYI (105 aa)). The cysteines at positions 29 and 32 are disulfide-linked.

This sequence belongs to the thioredoxin family.

In terms of biological role, participates in various redox reactions through the reversible oxidation of its active center dithiol to a disulfide and catalyzes dithiol-disulfide exchange reactions. This Acetoanaerobium sticklandii (strain ATCC 12662 / DSM 519 / JCM 1433 / CCUG 9281 / NCIMB 10654 / HF) (Clostridium sticklandii) protein is Thioredoxin (trxA).